Consider the following 633-residue polypeptide: Chaperone protein dnaK2 (633 aa).

Position 197 is a phosphothreonine; by autocatalysis (T197). The disordered stretch occupies residues 600 to 633 (SNAASQAADGTSSESNNSTEGNDDVIDAEFTESK). Residues 608–619 (DGTSSESNNSTE) show a composition bias toward low complexity. Positions 620–633 (GNDDVIDAEFTESK) are enriched in acidic residues.

It belongs to the heat shock protein 70 family.

Its function is as follows. Acts as a chaperone. This is Chaperone protein dnaK2 (dnaK2) from Prochlorococcus marinus (strain SARG / CCMP1375 / SS120).